The sequence spans 304 residues: N-acetylmuramic acid 6-phosphate etherase (304 aa).

In terms of domain architecture, SIS spans 62 to 225 (IVEAFQQGGR…TTASMILIGK (164 aa)). Glu90 serves as the catalytic Proton donor. The active site involves Glu121.

The protein belongs to the GCKR-like family. MurNAc-6-P etherase subfamily. In terms of assembly, homodimer.

It carries out the reaction N-acetyl-D-muramate 6-phosphate + H2O = N-acetyl-D-glucosamine 6-phosphate + (R)-lactate. The protein operates within amino-sugar metabolism; 1,6-anhydro-N-acetylmuramate degradation. It functions in the pathway amino-sugar metabolism; N-acetylmuramate degradation. Its pathway is cell wall biogenesis; peptidoglycan recycling. Specifically catalyzes the cleavage of the D-lactyl ether substituent of MurNAc 6-phosphate, producing GlcNAc 6-phosphate and D-lactate. Together with AnmK, is also required for the utilization of anhydro-N-acetylmuramic acid (anhMurNAc) either imported from the medium or derived from its own cell wall murein, and thus plays a role in cell wall recycling. This chain is N-acetylmuramic acid 6-phosphate etherase, found in Glaesserella parasuis serovar 5 (strain SH0165) (Haemophilus parasuis).